Consider the following 176-residue polypeptide: Nucleoside triphosphate/diphosphate phosphatase (176 aa).

The active-site Proton donor is the Arg23. Mg(2+) contacts are provided by Asn87, Asp103, Asp105, Asp107, Asp120, and Glu123.

The protein belongs to the Ntdp family. Mg(2+) is required as a cofactor.

It catalyses the reaction a ribonucleoside 5'-triphosphate + H2O = a ribonucleoside 5'-diphosphate + phosphate + H(+). The enzyme catalyses a ribonucleoside 5'-diphosphate + H2O = a ribonucleoside 5'-phosphate + phosphate + H(+). Has nucleoside phosphatase activity towards nucleoside triphosphates and nucleoside diphosphates. In Bacillus cereus (strain B4264), this protein is Nucleoside triphosphate/diphosphate phosphatase.